Reading from the N-terminus, the 171-residue chain is Ribosome maturation factor RimM (171 aa).

The 74-residue stretch at 97–170 folds into the PRC barrel domain; it reads KLNYFSWDHY…IIYMKLPVGL (74 aa).

The protein belongs to the RimM family. Binds ribosomal protein uS19.

It is found in the cytoplasm. Functionally, an accessory protein needed during the final step in the assembly of 30S ribosomal subunit, possibly for assembly of the head region. Essential for efficient processing of 16S rRNA. May be needed both before and after RbfA during the maturation of 16S rRNA. It has affinity for free ribosomal 30S subunits but not for 70S ribosomes. This chain is Ribosome maturation factor RimM, found in Azobacteroides pseudotrichonymphae genomovar. CFP2.